Reading from the N-terminus, the 579-residue chain is uncharacterized protein (579 aa).

The disordered stretch occupies residues 1–100 (MSGRRRNHPG…APPCGPYPGE (100 aa)). A compositionally biased stretch (polar residues) spans 80–90 (GQQQSEPQHNS). A run of 11 helical transmembrane segments spans residues 148 to 168 (FAVDSAMAVALANTLFFAAAS), 175 to 195 (VALYLLITIAPFAVIAPLIGP), 206 to 226 (VALATSFVLRTGLATLLIMNY), 228 to 248 (GATGSYPSMVLYPCALAMMVL), 279 to 299 (VFGLLGGTIAGGAIAAGVEFV), 303 to 323 (LFKLPGALFVVAAITISGALL), 378 to 398 (LWGNCTIKVMVGFLFLYPAFV), 407 to 427 (WVQLGMLGLIGTAAAIGNFAG), 448 to 468 (IAVTVLALAASVAGNLLMTTI), 504 to 524 (SESTLQLAWVLGGALGVMVYT), and 526 to 546 (LWVGFTAVSALLILGLAQTVV).

To M.tuberculosis Rv0876c.

The protein resides in the cell membrane. This is an uncharacterized protein from Mycobacterium leprae (strain TN).